We begin with the raw amino-acid sequence, 125 residues long: Histone H2A (125 aa).

Basic residues predominate over residues 1-18 (MSGRGKGGKVKGKSKTRS). The segment at 1–23 (MSGRGKGGKVKGKSKTRSSRAGL) is disordered. The residue at position 2 (Ser-2) is an N-acetylserine. Gln-104 is modified (N5-methylglutamine).

This sequence belongs to the histone H2A family. In terms of assembly, the nucleosome is a histone octamer containing two molecules each of H2A, H2B, H3 and H4 assembled in one H3-H4 heterotetramer and two H2A-H2B heterodimers. The octamer wraps approximately 147 bp of DNA.

It is found in the nucleus. It localises to the chromosome. Functionally, core component of nucleosome. Nucleosomes wrap and compact DNA into chromatin, limiting DNA accessibility to the cellular machineries which require DNA as a template. Histones thereby play a central role in transcription regulation, DNA repair, DNA replication and chromosomal stability. DNA accessibility is regulated via a complex set of post-translational modifications of histones, also called histone code, and nucleosome remodeling. The protein is Histone H2A of Sepia officinalis (Common cuttlefish).